Consider the following 941-residue polypeptide: Cilia- and flagella-associated protein 69 (941 aa).

Over residues Met-1–Ala-10 the composition is skewed to low complexity. Positions Met-1–Ser-23 are disordered.

The protein resides in the cell projection. It is found in the cilium. Its subcellular location is the flagellum. Functionally, cilium- and flagellum-associated protein. In the olfactory epithelium, regulates the speed of activation and termination of the odor response and thus contributes to the robustness of olfactory transduction pathways. Required for sperm flagellum assembly and stability. This chain is Cilia- and flagella-associated protein 69, found in Papio anubis (Olive baboon).